We begin with the raw amino-acid sequence, 930 residues long: APC membrane recruitment protein 1 (930 aa).

Disordered stretches follow at residues 1–33 (MEIATRCEVGAMRGPSSDSVSHDIPQPQSPPSV), 55–76 (FFGGRGRSQRKGSSKTGVTKSQ), 104–133 (CSEPQKSQEDHGKSQSLPRQRRGLRGLFSS), 161–193 (TVPGALPSVSDRGDYHGDSQGEELVPDVPNQTT), 222–245 (EMDKRRRAEEEGIGEDEKTGRQEG), and 366–454 (EVCY…PRDS). Basic and acidic residues predominate over residues 222–242 (EMDKRRRAEEEGIGEDEKTGR). Composition is skewed to polar residues over residues 377–399 (DSPSLTPDQQLSSIRATSSSSPM) and 413–424 (SPQSDRQESVPN). Positions 439–452 (EESRERPHQERLPR) are enriched in basic and acidic residues.

The protein belongs to the Amer family.

It localises to the cytoplasm. The protein localises to the cell membrane. The protein resides in the nucleus. Functionally, regulator of the canonical Wnt signaling pathway. Acts by specifically binding phosphatidylinositol 4,5-bisphosphate (PtdIns(4,5)P2), translocating to the cell membrane and interacting with key regulators of the canonical Wnt signaling pathway, such as components of the beta-catenin destruction complex. Acts both as a positive and negative regulator of the Wnt signaling pathway, depending on the context. The polypeptide is APC membrane recruitment protein 1 (amer1) (Danio rerio (Zebrafish)).